The sequence spans 425 residues: Serine--tRNA ligase (425 aa).

228–230 (TAE) is an L-serine binding site. 259–261 (RSE) serves as a coordination point for ATP. Glu-282 contributes to the L-serine binding site. ATP is bound at residue 346–349 (EIAS). Ser-382 contributes to the L-serine binding site.

This sequence belongs to the class-II aminoacyl-tRNA synthetase family. Type-1 seryl-tRNA synthetase subfamily. As to quaternary structure, homodimer. The tRNA molecule binds across the dimer.

The protein resides in the cytoplasm. It carries out the reaction tRNA(Ser) + L-serine + ATP = L-seryl-tRNA(Ser) + AMP + diphosphate + H(+). It catalyses the reaction tRNA(Sec) + L-serine + ATP = L-seryl-tRNA(Sec) + AMP + diphosphate + H(+). The protein operates within aminoacyl-tRNA biosynthesis; selenocysteinyl-tRNA(Sec) biosynthesis; L-seryl-tRNA(Sec) from L-serine and tRNA(Sec): step 1/1. In terms of biological role, catalyzes the attachment of serine to tRNA(Ser). Is also able to aminoacylate tRNA(Sec) with serine, to form the misacylated tRNA L-seryl-tRNA(Sec), which will be further converted into selenocysteinyl-tRNA(Sec). This chain is Serine--tRNA ligase, found in Rickettsia canadensis (strain McKiel).